The primary structure comprises 438 residues: 3-phosphoshikimate 1-carboxyvinyltransferase 1 (438 aa).

3-phosphoshikimate is bound by residues Lys30, Ser31, and Arg35. Residue Lys30 participates in phosphoenolpyruvate binding. Gly104 and Arg132 together coordinate phosphoenolpyruvate. 3-phosphoshikimate-binding residues include Ser178, Ser179, Gln180, Ser207, Glu326, and His353. Gln180 is a phosphoenolpyruvate binding site. The active-site Proton acceptor is Glu326. Residues Arg357, Arg398, and Lys423 each coordinate phosphoenolpyruvate.

Belongs to the EPSP synthase family. Monomer.

It localises to the cytoplasm. It carries out the reaction 3-phosphoshikimate + phosphoenolpyruvate = 5-O-(1-carboxyvinyl)-3-phosphoshikimate + phosphate. The protein operates within metabolic intermediate biosynthesis; chorismate biosynthesis; chorismate from D-erythrose 4-phosphate and phosphoenolpyruvate: step 6/7. Functionally, catalyzes the transfer of the enolpyruvyl moiety of phosphoenolpyruvate (PEP) to the 5-hydroxyl of shikimate-3-phosphate (S3P) to produce enolpyruvyl shikimate-3-phosphate and inorganic phosphate. This is 3-phosphoshikimate 1-carboxyvinyltransferase 1 from Streptomyces coelicolor (strain ATCC BAA-471 / A3(2) / M145).